A 256-amino-acid chain; its full sequence is Thiazole synthase (256 aa).

The active-site Schiff-base intermediate with DXP is lysine 95. Residues glycine 156, 182 to 183 (AG), and 204 to 205 (NT) each bind 1-deoxy-D-xylulose 5-phosphate.

It belongs to the ThiG family. Homotetramer. Forms heterodimers with either ThiH or ThiS.

It localises to the cytoplasm. The enzyme catalyses [ThiS sulfur-carrier protein]-C-terminal-Gly-aminoethanethioate + 2-iminoacetate + 1-deoxy-D-xylulose 5-phosphate = [ThiS sulfur-carrier protein]-C-terminal Gly-Gly + 2-[(2R,5Z)-2-carboxy-4-methylthiazol-5(2H)-ylidene]ethyl phosphate + 2 H2O + H(+). Its pathway is cofactor biosynthesis; thiamine diphosphate biosynthesis. Functionally, catalyzes the rearrangement of 1-deoxy-D-xylulose 5-phosphate (DXP) to produce the thiazole phosphate moiety of thiamine. Sulfur is provided by the thiocarboxylate moiety of the carrier protein ThiS. In vitro, sulfur can be provided by H(2)S. The sequence is that of Thiazole synthase from Escherichia fergusonii (strain ATCC 35469 / DSM 13698 / CCUG 18766 / IAM 14443 / JCM 21226 / LMG 7866 / NBRC 102419 / NCTC 12128 / CDC 0568-73).